A 1028-amino-acid chain; its full sequence is Protein SMAX1-LIKE 5 (1028 aa).

Residues 8–199 enclose the Clp R domain; it reads IQQTLTTEAA…CVEDCSVSSV (192 aa). 2 repeat regions span residues 12 to 102 and 116 to 199; these read LTTE…LNRL and LANA…VSSV. The EAR signature appears at 871 to 875; that stretch reads LDLNI.

It belongs to the ClpA/ClpB family. Interacts probably with TPL/TPR in an EAR-motif dependent manner. As to expression, detected in roots, seedlings and axillary branches.

In terms of biological role, may function in a transcriptional corepressor complex. The sequence is that of Protein SMAX1-LIKE 5 from Arabidopsis thaliana (Mouse-ear cress).